We begin with the raw amino-acid sequence, 750 residues long: Neprilysin (750 aa).

The span at 1 to 14 shows a compositional bias: polar residues; that stretch reads MGRSESQMDITDIN. The segment at 1–20 is disordered; that stretch reads MGRSESQMDITDINTPKPKK. Gly-2 is lipidated: N-myristoyl glycine. The Cytoplasmic portion of the chain corresponds to 2-28; it reads GRSESQMDITDINTPKPKKKQRWTPLE. Ser-4 and Ser-6 each carry phosphoserine. Positions 16–23 match the Stop-transfer sequence motif; the sequence is PKPKKKQR. Residues 29-51 traverse the membrane as a helical; Signal-anchor for type II membrane protein segment; the sequence is ISLSVLVLLLTVIAVTMIALYAT. Over 52–750 the chain is Extracellular; the sequence is YDDGICKSSD…MNPEKKCRVW (699 aa). The Peptidase M13 domain occupies 56 to 750; the sequence is ICKSSDCIKS…MNPEKKCRVW (695 aa). 6 disulfides stabilise this stretch: Cys-57-Cys-62, Cys-80-Cys-735, Cys-88-Cys-695, Cys-143-Cys-411, Cys-234-Cys-242, and Cys-621-Cys-747. Arg-103 is a binding site for a peptide. Asn-145 carries N-linked (GlcNAc...) asparagine glycosylation. N-linked (GlcNAc...) asparagine glycosylation is found at Asn-285, Asn-311, and Asn-325. Position 584 (His-584) interacts with Zn(2+). Residue Glu-585 is part of the active site. Residue His-588 participates in Zn(2+) binding. N-linked (GlcNAc...) asparagine glycosylation is present at Asn-628. A Zn(2+)-binding site is contributed by Glu-647. The active-site Proton donor is Asp-651.

Belongs to the peptidase M13 family. Requires Zn(2+) as cofactor. Post-translationally, myristoylation is a determinant of membrane targeting. Glycosylation at Asn-628 is necessary both for surface expression and neutral endopeptidase activity.

It localises to the cell membrane. The enzyme catalyses Preferential cleavage of polypeptides between hydrophobic residues, particularly with Phe or Tyr at P1'.. It carries out the reaction substance P + H2O = substance P(1-9) + L-Leu-L-Met-NH2. The catalysed reaction is substance P + H2O = substance P(1-7) + L-Phe-Gly-L-Leu-L-Met-NH2. It catalyses the reaction neurotensin + H2O = neurotensin(1-11) + L-isoleucyl-L-leucine. The enzyme catalyses neurotensin + H2O = neurotensin(1-10) + L-tyrosyl-L-isoleucyl-L-leucine. Its activity is regulated as follows. Inhibited by mixanpril, an orally-active drug used for the treatment of hypertension. Its function is as follows. Thermolysin-like specificity, but is almost confined on acting on polypeptides of up to 30 amino acids. Biologically important in the destruction of opioid peptides such as Met- and Leu-enkephalins by cleavage of a Gly-Phe bond. Catalyzes cleavage of bradykinin, substance P and neurotensin peptides. Able to cleave angiotensin-1, angiotensin-2 and angiotensin 1-9. Involved in the degradation of atrial natriuretic factor (ANF) and brain natriuretic factor (BNP(1-32)). Displays UV-inducible elastase activity toward skin preelastic and elastic fibers. The chain is Neprilysin (MME) from Oryctolagus cuniculus (Rabbit).